Here is a 618-residue protein sequence, read N- to C-terminus: 1-deoxy-D-xylulose-5-phosphate synthase (618 aa).

Residues histidine 75 and 116–118 each bind thiamine diphosphate; that span reads GHS. Position 147 (aspartate 147) interacts with Mg(2+). Residues 148–149, asparagine 176, tyrosine 283, and glutamate 364 each bind thiamine diphosphate; that span reads GA. Asparagine 176 contributes to the Mg(2+) binding site.

This sequence belongs to the transketolase family. DXPS subfamily. Homodimer. The cofactor is Mg(2+). It depends on thiamine diphosphate as a cofactor.

The enzyme catalyses D-glyceraldehyde 3-phosphate + pyruvate + H(+) = 1-deoxy-D-xylulose 5-phosphate + CO2. The protein operates within metabolic intermediate biosynthesis; 1-deoxy-D-xylulose 5-phosphate biosynthesis; 1-deoxy-D-xylulose 5-phosphate from D-glyceraldehyde 3-phosphate and pyruvate: step 1/1. Catalyzes the acyloin condensation reaction between C atoms 2 and 3 of pyruvate and glyceraldehyde 3-phosphate to yield 1-deoxy-D-xylulose-5-phosphate (DXP). In Thiobacillus denitrificans (strain ATCC 25259 / T1), this protein is 1-deoxy-D-xylulose-5-phosphate synthase.